The sequence spans 343 residues: Pyridoxal 5'-phosphate synthase subunit PDX1 (343 aa).

Position 73 (Asp73) interacts with D-ribose 5-phosphate. The active-site Schiff-base intermediate with D-ribose 5-phosphate is the Lys130. Gly202 is a binding site for D-ribose 5-phosphate. Gln214 contacts D-glyceraldehyde 3-phosphate. Residues Gly263 and 284–285 (GS) each bind D-ribose 5-phosphate.

It belongs to the PdxS/SNZ family.

The catalysed reaction is aldehydo-D-ribose 5-phosphate + D-glyceraldehyde 3-phosphate + L-glutamine = pyridoxal 5'-phosphate + L-glutamate + phosphate + 3 H2O + H(+). It participates in cofactor biosynthesis; pyridoxal 5'-phosphate biosynthesis. Functionally, catalyzes the formation of pyridoxal 5'-phosphate from ribose 5-phosphate (RBP), glyceraldehyde 3-phosphate (G3P) and ammonia. The ammonia is provided by PDX2. Can also use ribulose 5-phosphate and dihydroxyacetone phosphate as substrates, resulting from enzyme-catalyzed isomerization of RBP and G3P, respectively. Also plays an indirect role in resistance to singlet oxygen-generating photosensitizers. This chain is Pyridoxal 5'-phosphate synthase subunit PDX1 (PDX1), found in Cercospora nicotianae (Barn spot disease fungus).